Consider the following 432-residue polypeptide: MIERVKGTRDFLPEEMVKRRWVFERIRERFETYGFKEVLTPTMEYTKLFELRSGEEVVKQLYAFKDKGGRDVSLRPDMTSSVARLYVNMFQTAPKPIKWYYIANMFRYEEPQSGRYREFWQAGVELIGSDKVEADAEVIALFVESYLATGLREFTVNIGDRILLDEFAKMLGVKDDIGLMRIIDKKDKLPQEDFINALKEFGLDKNGIEKVLELINIKGKPDEVLPLAEELFTSEVAKNEINRLYALIDLLEAYEVKDWIRIDLGIARGFDYYTSIVFEAIAPNDLGIGSIGGGGRYDNLIEVFGGKPTPATGFAIGIERLIPILEAKGLIPEVQIAPDVYVVPIGERMKKVAIRIATSLRKSGIKTEIELMGRKLKKAMDYANKVGVKKTIIVGEKDLERGVVTVRDMESGEQNEVKIDDIVEFMKNALKT.

The protein belongs to the class-II aminoacyl-tRNA synthetase family.

It localises to the cytoplasm. The enzyme catalyses tRNA(His) + L-histidine + ATP = L-histidyl-tRNA(His) + AMP + diphosphate + H(+). The protein is Histidine--tRNA ligase of Pyrococcus furiosus (strain ATCC 43587 / DSM 3638 / JCM 8422 / Vc1).